Consider the following 107-residue polypeptide: Nucleoid-associated protein A1C_06705 (107 aa).

The protein belongs to the YbaB/EbfC family. In terms of assembly, homodimer.

Its subcellular location is the cytoplasm. The protein resides in the nucleoid. Binds to DNA and alters its conformation. May be involved in regulation of gene expression, nucleoid organization and DNA protection. This Rickettsia akari (strain Hartford) protein is Nucleoid-associated protein A1C_06705.